The sequence spans 339 residues: Phenylalanine--tRNA ligase alpha subunit (339 aa).

Glu-254 contacts Mg(2+).

Belongs to the class-II aminoacyl-tRNA synthetase family. Phe-tRNA synthetase alpha subunit type 1 subfamily. Tetramer of two alpha and two beta subunits. It depends on Mg(2+) as a cofactor.

It is found in the cytoplasm. The enzyme catalyses tRNA(Phe) + L-phenylalanine + ATP = L-phenylalanyl-tRNA(Phe) + AMP + diphosphate + H(+). This is Phenylalanine--tRNA ligase alpha subunit from Desulforudis audaxviator (strain MP104C).